Reading from the N-terminus, the 119-residue chain is MSNTVRSLVIKTNVVKRIIKDVELAHIDINEAEKRVQSKIDNGEDSAEIEHQKFVLKKHLEALPDALVRLRNATNDLESISSDSAYEGTPELEQANEYLEKAKEVIEKEQTNFPTNGYH.

Belongs to the TBCA family. In terms of assembly, supercomplex made of cofactors A to E. Cofactors A and D function by capturing and stabilizing tubulin in a quasi-native conformation. Cofactor E binds to the cofactor D-tubulin complex; interaction with cofactor C then causes the release of tubulin polypeptides that are committed to the native state.

Its subcellular location is the cytoplasm. It is found in the cytoskeleton. In terms of biological role, required for the maintenance of microtubule structures and cell polarity. Beta-tubulin-folding protein; may have a regulatory role in the tubulin-folding pathway. This Schizosaccharomyces pombe (strain 972 / ATCC 24843) (Fission yeast) protein is Tubulin-specific chaperone A (alp31).